A 237-amino-acid polypeptide reads, in one-letter code: Phosphoribosylaminoimidazole-succinocarboxamide synthase (237 aa).

This sequence belongs to the SAICAR synthetase family.

The catalysed reaction is 5-amino-1-(5-phospho-D-ribosyl)imidazole-4-carboxylate + L-aspartate + ATP = (2S)-2-[5-amino-1-(5-phospho-beta-D-ribosyl)imidazole-4-carboxamido]succinate + ADP + phosphate + 2 H(+). Its pathway is purine metabolism; IMP biosynthesis via de novo pathway; 5-amino-1-(5-phospho-D-ribosyl)imidazole-4-carboxamide from 5-amino-1-(5-phospho-D-ribosyl)imidazole-4-carboxylate: step 1/2. This Baumannia cicadellinicola subsp. Homalodisca coagulata protein is Phosphoribosylaminoimidazole-succinocarboxamide synthase.